The sequence spans 475 residues: Gelsolin-like protein 1 (475 aa).

Residues 1–131 form an actin binding, actin severing, Ca-sensitive region; sequence MGGTSLDPAL…GYRHVDDQFK (131 aa). The necessary for barbed end capping activity stretch occupies residues 1–239; the sequence is MGGTSLDPAL…VRKVSKGKDD (239 aa). The Gelsolin-like 1 repeat unit spans residues 27–105; that stretch reads FVLEPVPEVD…IQNYESPLFL (79 aa). The tract at residues 70-73 is actin-actin interfilament contact point; sequence DEIG. A required for synapse elimination during development region spans residues 106–147; sequence SYFPDGIRYVSGGYESGYRHVDDQFKNWKPHLFHCKGKRNVR. The tract at residues 133–227 is required for phosphatidylinositol 4,5-bisphosphate binding and regulation; the sequence is WKPHLFHCKG…STFWSYFGGV (95 aa). Gelsolin-like repeat units lie at residues 148–208, 275–341, and 375–447; these read CTEV…KVHI, RKEQ…STQF, and EIAN…PPTF. Residues 240–475 are F- and G-actin binding, Ca-independent; it reads DDNYWKRLTE…VQNMRRLLFH (236 aa). The inhibitory for phosphatidylinositol 4,5-bisphosphate binding activity stretch occupies residues 248-348; the sequence is TEQITLWKVS…TQFTQWFRDW (101 aa).

This sequence belongs to the villin/gelsolin family. As to quaternary structure, monomer. Binds to actin monomers and filaments. Post-translationally, cleavage by caspase ced-3 activates its actin-severing function and is required for the elimination of presynaptic components during development.

It is found in the cytoplasm. The protein localises to the cytoskeleton. Functionally, calcium-regulated, actin-modulating protein that binds to the plus (or barbed) ends of actin monomers or filaments, preventing monomer exchange (end-blocking or capping). Binds actin but does not nucleate actin polymerization, albeit slows down elongation by blocking the barbed ends. By promoting actin depolymerization, required for the elimination of presynaptic components downstream of the egl-1, ced-4 and ced-3 apoptotic pathway during larval development. The polypeptide is Gelsolin-like protein 1 (Caenorhabditis elegans).